Consider the following 145-residue polypeptide: Putative pre-16S rRNA nuclease (145 aa).

Belongs to the YqgF nuclease family.

The protein localises to the cytoplasm. Functionally, could be a nuclease involved in processing of the 5'-end of pre-16S rRNA. The protein is Putative pre-16S rRNA nuclease of Pseudomonas fluorescens (strain ATCC BAA-477 / NRRL B-23932 / Pf-5).